Here is a 1018-residue protein sequence, read N- to C-terminus: Thrombospondin type-1 domain-containing protein 4 (1018 aa).

The first 26 residues, 1 to 26, serve as a signal peptide directing secretion; that stretch reads MVSYLTSCLSALSTLLLLLGSQLVCP. 3 disordered regions span residues 34–56, 116–240, and 534–623; these read KVPQ…SPGV, HRSQ…PSEA, and SPQV…NWKQ. A TSP type-1 1 domain is found at 54–307; it reads PGVWGSWGPW…YKLCNTNACP (254 aa). Over residues 187-199 the composition is skewed to basic residues; sequence QRLRRQRPSSRHS. Residues 216-230 show a composition bias toward polar residues; the sequence is HQFSHSQPLYQSDSG. 2 stretches are compositionally biased toward basic and acidic residues: residues 558-573 and 592-603; these read QEDR…KEDS and RHPERFPSHRPD. 5 TSP type-1 domains span residues 676 to 737, 739 to 792, 793 to 851, 852 to 911, and 912 to 968; these read CPAF…KICS, WQIR…DMGP, CAKS…GPCT, GKVE…HLKP, and CGAK…QDCV. A PLAC domain is found at 971–1008; sequence VDENCKDKYYNCNVVVQARLCVYNYYKTACCASCTRVA.

As to quaternary structure, isoform 2 interacts with FBN1. Isoform 2 may interact with TGFB1. Both isoforms are expressed in the embryo from 7 dpc through 17. Isoform 1 is widely expressed in adult tissues. Isoform 2 is detected in brain, spinal cord, eye, kidney, stomach and uterus. Mainly observed in fibrillar extracellular matrices in elastic tissues (at protein level).

Its subcellular location is the secreted. The protein localises to the extracellular space. It is found in the extracellular matrix. Its function is as follows. Promotes FBN1 matrix assembly. Attenuates TGFB signaling, possibly by accelerating the sequestration of large latent complexes of TGFB or active TGFB by FBN1 microfibril assembly, thereby negatively regulating the expression of TGFB regulatory targets, such as POSTN. This Mus musculus (Mouse) protein is Thrombospondin type-1 domain-containing protein 4 (Thsd4).